The following is a 432-amino-acid chain: D-amino acid dehydrogenase (432 aa).

3 to 17 (VVILGSGVVGVASAW) provides a ligand contact to FAD.

Belongs to the DadA oxidoreductase family. The cofactor is FAD.

The catalysed reaction is a D-alpha-amino acid + A + H2O = a 2-oxocarboxylate + AH2 + NH4(+). It participates in amino-acid degradation; D-alanine degradation; NH(3) and pyruvate from D-alanine: step 1/1. In terms of biological role, oxidative deamination of D-amino acids. In Shigella dysenteriae serotype 1 (strain Sd197), this protein is D-amino acid dehydrogenase.